The chain runs to 468 residues: 3-isopropylmalate dehydratase large subunit (468 aa).

Cysteine 346, cysteine 406, and cysteine 409 together coordinate [4Fe-4S] cluster.

This sequence belongs to the aconitase/IPM isomerase family. LeuC type 1 subfamily. As to quaternary structure, heterodimer of LeuC and LeuD. [4Fe-4S] cluster serves as cofactor.

The enzyme catalyses (2R,3S)-3-isopropylmalate = (2S)-2-isopropylmalate. Its pathway is amino-acid biosynthesis; L-leucine biosynthesis; L-leucine from 3-methyl-2-oxobutanoate: step 2/4. Functionally, catalyzes the isomerization between 2-isopropylmalate and 3-isopropylmalate, via the formation of 2-isopropylmaleate. The polypeptide is 3-isopropylmalate dehydratase large subunit (Cyanothece sp. (strain PCC 7425 / ATCC 29141)).